We begin with the raw amino-acid sequence, 933 residues long: Bifunctional uridylyltransferase/uridylyl-removing enzyme (933 aa).

The tract at residues 1–390 is uridylyltransferase; it reads MLSTRAASAD…RLAALARRKD (390 aa). Positions 391–745 are uridylyl-removing; sequence VDGFVVDGER…TRIDRGRAIT (355 aa). In terms of domain architecture, HD spans 506–628; the sequence is VDEHTLFALG…VQSPERLRLL (123 aa). ACT domains are found at residues 746-829 and 859-933; these read EVTI…DLTK and VIEV…DPSA.

This sequence belongs to the GlnD family. The cofactor is Mg(2+).

The catalysed reaction is [protein-PII]-L-tyrosine + UTP = [protein-PII]-uridylyl-L-tyrosine + diphosphate. It carries out the reaction [protein-PII]-uridylyl-L-tyrosine + H2O = [protein-PII]-L-tyrosine + UMP + H(+). Its activity is regulated as follows. Uridylyltransferase (UTase) activity is inhibited by glutamine, while glutamine activates uridylyl-removing (UR) activity. Uridylylation process is dependent on ATP and 2-oxoglutarate, which are effector molecules that likely bind to PII proteins and control their activity. In terms of biological role, modifies, by uridylylation and deuridylylation, the PII regulatory proteins GlnB and GlnZ, in response to the nitrogen status of the cell that GlnD senses through the glutamine level. Under low glutamine levels, catalyzes the conversion of the PII proteins and UTP to PII-UMP and PPi, while under higher glutamine levels, GlnD hydrolyzes PII-UMP to PII and UMP (deuridylylation). Thus, controls uridylylation state and activity of the PII proteins, and plays an important role in the regulation of nitrogen fixation and metabolism. This chain is Bifunctional uridylyltransferase/uridylyl-removing enzyme, found in Azospirillum brasilense.